The primary structure comprises 463 residues: Annexin A7 (463 aa).

2 stretches are compositionally biased toward pro residues: residues 1–18 (MSYP…PGYP) and 26–38 (FPPP…PSGF). Disordered stretches follow at residues 1 to 54 (MSYP…SSGY) and 71 to 153 (GYPG…THGT). Residues 1 to 140 (MSYPGYPPTG…QYPGGQSPYP (140 aa)) form a repeat-rich region region. Residues 5 to 20 (GYPPTGYPPFPGYPPT) form a 3 X 5 AA tandem repeats of G-Y-P-P-X region. Residues 86–99 (GGQGFGAPPGGAGF) show a composition bias toward gly residues. 4 Annexin repeats span residues 160-231 (FDAM…ALFM), 232-303 (PSTY…SMCQ), 315-387 (QLAQ…TILQ), and 391-462 (NRPA…AIVG). K208 is modified (N6-acetyllysine).

It belongs to the annexin family. As to quaternary structure, interacts with PDCD6.

Calcium/phospholipid-binding protein which promotes membrane fusion and is involved in exocytosis. In Bos taurus (Bovine), this protein is Annexin A7 (ANXA7).